Consider the following 184-residue polypeptide: Dirigent protein 14 (184 aa).

The first 20 residues, 1-20, serve as a signal peptide directing secretion; it reads MANQIYLFSLICLSVLLCQS. Cysteines 36 and 182 form a disulfide. Residues asparagine 55 and asparagine 119 are each glycosylated (N-linked (GlcNAc...) asparagine).

Belongs to the plant dirigent protein family. Homodimer.

Its subcellular location is the secreted. It localises to the extracellular space. The protein resides in the apoplast. Functionally, dirigent proteins impart stereoselectivity on the phenoxy radical-coupling reaction, yielding optically active lignans from two molecules of coniferyl alcohol in the biosynthesis of lignans, flavonolignans, and alkaloids and thus plays a central role in plant secondary metabolism. In Arabidopsis thaliana (Mouse-ear cress), this protein is Dirigent protein 14 (DIR14).